The sequence spans 576 residues: Arginine--tRNA ligase (576 aa).

A 'HIGH' region motif is present at residues 126-136 (ANPTGPMHIGH).

It belongs to the class-I aminoacyl-tRNA synthetase family. Monomer.

The protein localises to the cytoplasm. The catalysed reaction is tRNA(Arg) + L-arginine + ATP = L-arginyl-tRNA(Arg) + AMP + diphosphate. This chain is Arginine--tRNA ligase, found in Rickettsia akari (strain Hartford).